The following is a 116-amino-acid chain: Signal recognition particle 14 kDa protein (116 aa).

Belongs to the SRP14 family. In terms of assembly, heterodimer with ZK512.4/SRP9; binds RNA as heterodimer. Component of a signal recognition particle (SRP) complex that consists of a 7SL RNA molecule of 300 nucleotides and six protein subunits: srpa-72, srpa-68, SRP54, F37F2.2/SRP19, F25G6.8/SRP14 and ZK512.4/SRP9.

It localises to the cytoplasm. Component of the signal recognition particle (SRP) complex, a ribonucleoprotein complex that mediates the cotranslational targeting of secretory and membrane proteins to the endoplasmic reticulum (ER). F37F2.2/srpa-19 together with F25G6.8/srpa-14 and the Alu portion of the SRP RNA, constitutes the elongation arrest domain of SRP. The complex of F37F2.2/srpa-19 and F25G6.8/srpa-14 is required for SRP RNA binding. This chain is Signal recognition particle 14 kDa protein, found in Caenorhabditis elegans.